The sequence spans 626 residues: Hemocyanin AA6 chain (626 aa).

Cu cation is bound by residues His170, His174, His201, His321, His325, and His361. Ser374 is subject to Phosphoserine.

The protein belongs to the tyrosinase family. Hemocyanin subfamily. Scorpion hemocyanin is a 24-chain polymer with 8 different chains identified, assembled in hexameric substructures. Three disulfide bonds are present. In terms of tissue distribution, hemolymph.

The protein resides in the secreted. It is found in the extracellular space. In terms of biological role, hemocyanins are copper-containing oxygen carriers occurring freely dissolved in the hemolymph of many mollusks and arthropods. This chain is Hemocyanin AA6 chain, found in Androctonus australis (Sahara scorpion).